A 121-amino-acid polypeptide reads, in one-letter code: Ribonuclease P protein component (121 aa).

This sequence belongs to the RnpA family. In terms of assembly, consists of a catalytic RNA component (M1 or rnpB) and a protein subunit.

It catalyses the reaction Endonucleolytic cleavage of RNA, removing 5'-extranucleotides from tRNA precursor.. RNaseP catalyzes the removal of the 5'-leader sequence from pre-tRNA to produce the mature 5'-terminus. It can also cleave other RNA substrates such as 4.5S RNA. The protein component plays an auxiliary but essential role in vivo by binding to the 5'-leader sequence and broadening the substrate specificity of the ribozyme. This chain is Ribonuclease P protein component, found in Bifidobacterium adolescentis (strain ATCC 15703 / DSM 20083 / NCTC 11814 / E194a).